A 146-amino-acid chain; its full sequence is Hemoglobin subunit beta (146 aa).

Positions 2–146 (QWTAEEKQLI…VAHALARKYH (145 aa)) constitute a Globin domain. Positions 63 and 92 each coordinate heme b.

It belongs to the globin family. In terms of assembly, heterotetramer of two alpha chains and two beta chains. In terms of tissue distribution, red blood cells.

In terms of biological role, involved in oxygen transport from the lung to the various peripheral tissues. This is Hemoglobin subunit beta (HBB) from Passer montanus (Eurasian tree sparrow).